Consider the following 502-residue polypeptide: Histidine--tRNA ligase (502 aa).

The protein belongs to the class-II aminoacyl-tRNA synthetase family. In terms of assembly, homodimer.

It localises to the cytoplasm. It catalyses the reaction tRNA(His) + L-histidine + ATP = L-histidyl-tRNA(His) + AMP + diphosphate + H(+). The protein is Histidine--tRNA ligase of Brucella suis (strain ATCC 23445 / NCTC 10510).